A 123-amino-acid polypeptide reads, in one-letter code: MATRKSAAPNRSFKVSDQIQRDLAELIARELKDPRVGMVTLQSVEVTPDYAHAKVYFSLLVGDPQATQEALNQAAGFLRNGLFKRLHIHTVPTLHFIYDRTSERAADMNALIAKAVSSRGKEE.

It belongs to the RbfA family. Monomer. Binds 30S ribosomal subunits, but not 50S ribosomal subunits or 70S ribosomes.

The protein localises to the cytoplasm. In terms of biological role, one of several proteins that assist in the late maturation steps of the functional core of the 30S ribosomal subunit. Associates with free 30S ribosomal subunits (but not with 30S subunits that are part of 70S ribosomes or polysomes). Required for efficient processing of 16S rRNA. May interact with the 5'-terminal helix region of 16S rRNA. The polypeptide is Ribosome-binding factor A (Delftia acidovorans (strain DSM 14801 / SPH-1)).